We begin with the raw amino-acid sequence, 863 residues long: Dynamin-3 (863 aa).

Residues 28-294 form the Dynamin-type G domain; it reads LLELPQIAVV…LTNHIRDTLP (267 aa). A G1 motif region spans residues 38 to 45; it reads GGQSAGKS. GTP is bound at residue 38–46; the sequence is GGQSAGKSS. The interval 64–66 is G2 motif; sequence VTR. Residues 136–139 form a G3 motif region; sequence DLPG. Positions 205–208 are G4 motif; the sequence is TKLD. 205-211 contributes to the GTP binding site; the sequence is TKLDLMD. A Phosphotyrosine modification is found at Tyr-231. Residues 235 to 238 are G5 motif; sequence VNRS. 236–239 serves as a coordination point for GTP; sequence NRSQ. Lys-299 carries the N6-acetyllysine modification. A PH domain is found at 515 to 621; it reads QVIRKGWLTV…WKASLLRAGV (107 aa). Phosphotyrosine is present on Tyr-593. At Lys-594 the chain carries N6-acetyllysine. Disordered regions lie at residues 626 to 647 and 742 to 863; these read SVGSNKTENDENGQAENFSMDP and ATVS…SLLD. Residues 627–642 are compositionally biased toward polar residues; that stretch reads VGSNKTENDENGQAEN. The 92-residue stretch at 653–744 folds into the GED domain; the sequence is VETIRNLVDS…IIGDINTATV (92 aa). A phosphoserine mark is found at Ser-763 and Ser-767. Composition is skewed to pro residues over residues 791-816 and 826-849; these read PAIPSPGPHSGAPPVPFRPGPLPPFP and PQVPSRPTRAPPSVPSRRPPPSPT. Phosphoserine is present on Ser-847.

It belongs to the TRAFAC class dynamin-like GTPase superfamily. Dynamin/Fzo/YdjA family.

It localises to the cytoplasm. The protein resides in the cytoskeleton. The catalysed reaction is GTP + H2O = GDP + phosphate + H(+). In terms of biological role, microtubule-associated force-producing protein involved in producing microtubule bundles and able to bind and hydrolyze GTP. Most probably involved in vesicular trafficking processes, in particular endocytosis. This Mus musculus (Mouse) protein is Dynamin-3 (Dnm3).